Reading from the N-terminus, the 416-residue chain is CinA-like protein (416 aa).

This sequence belongs to the CinA family.

The sequence is that of CinA-like protein from Thermosynechococcus vestitus (strain NIES-2133 / IAM M-273 / BP-1).